Consider the following 56-residue polypeptide: Conotoxin Cal6.41a (56 aa).

Residues 1-23 (MSGSGAMLLGLLILVAMATSLDT) form the signal peptide. Disulfide bonds link Cys27-Cys41, Cys33-Cys50, and Cys40-Cys54.

In terms of tissue distribution, expressed by the venom duct.

The protein resides in the secreted. Functionally, probable neurotoxin. This chain is Conotoxin Cal6.41a, found in Californiconus californicus (California cone).